The chain runs to 203 residues: Glutathione-specific gamma-glutamylcyclotransferase (203 aa).

12-17 (VFGYGS) is a substrate binding site. Glutamate 105 acts as the Proton acceptor in catalysis.

It belongs to the gamma-glutamylcyclotransferase family. ChaC subfamily.

The protein resides in the cytoplasm. Its subcellular location is the nucleus. It carries out the reaction glutathione = L-cysteinylglycine + 5-oxo-L-proline. Gamma-glutamylcyclotransferase acting specifically on glutathione, but not on other gamma-glutamyl peptides. Allows utilization of gluthathione through subsequent cleavage of the Cys-Gly dipeptide by Cys-Gly metallodipeptidase dug1. This is Glutathione-specific gamma-glutamylcyclotransferase from Schizosaccharomyces pombe (strain 972 / ATCC 24843) (Fission yeast).